Consider the following 238-residue polypeptide: Orotate phosphoribosyltransferase (238 aa).

Residue K29 coordinates 5-phospho-alpha-D-ribose 1-diphosphate. 37-38 contributes to the orotate binding site; that stretch reads FF. Residues 87–88, R118, K119, K122, H124, and 144–152 contribute to the 5-phospho-alpha-D-ribose 1-diphosphate site; these read YK and DDVITAGTA. Orotate contacts are provided by T148 and R176.

It belongs to the purine/pyrimidine phosphoribosyltransferase family. PyrE subfamily. As to quaternary structure, homodimer.

It catalyses the reaction orotidine 5'-phosphate + diphosphate = orotate + 5-phospho-alpha-D-ribose 1-diphosphate. It functions in the pathway pyrimidine metabolism; UMP biosynthesis via de novo pathway; UMP from orotate: step 1/2. Catalyzes the transfer of a ribosyl phosphate group from 5-phosphoribose 1-diphosphate to orotate, leading to the formation of orotidine monophosphate (OMP). In Coccidioides immitis (strain RS) (Valley fever fungus), this protein is Orotate phosphoribosyltransferase (URA5).